The following is a 585-amino-acid chain: Cyclic nucleotide-binding domain-containing protein 2 (585 aa).

An a nucleoside 3',5'-cyclic phosphate-binding site is contributed by Ser-116–Arg-239.

It localises to the cytoplasm. It is found in the cytosol. Its function is as follows. Essential for male fertility. Plays an important role in spermatogenesis and regulates sperm motility by controlling the development of the flagellar bending of sperm. This chain is Cyclic nucleotide-binding domain-containing protein 2 (CNBD2), found in Macaca fascicularis (Crab-eating macaque).